The sequence spans 104 residues: L-rhamnose mutarotase (104 aa).

A substrate-binding site is contributed by tyrosine 18. Histidine 22 (proton donor) is an active-site residue. Substrate is bound by residues tyrosine 41 and 76–77 (WW). The interval 85–104 (PSNPDNSPISDALDPVFYLD) is disordered.

It belongs to the rhamnose mutarotase family. In terms of assembly, homodimer.

The protein resides in the cytoplasm. It carries out the reaction alpha-L-rhamnose = beta-L-rhamnose. It participates in carbohydrate metabolism; L-rhamnose metabolism. In terms of biological role, involved in the anomeric conversion of L-rhamnose. This chain is L-rhamnose mutarotase, found in Pectobacterium atrosepticum (strain SCRI 1043 / ATCC BAA-672) (Erwinia carotovora subsp. atroseptica).